Reading from the N-terminus, the 32-residue chain is Chlorophyll a-b binding protein 2, chloroplastic (32 aa).

2 residues coordinate chlorophyll a: Glu19 and His22. Residue Arg24 coordinates chlorophyll b.

The protein belongs to the light-harvesting chlorophyll a/b-binding (LHC) protein family. In terms of assembly, the LHC complex consists of chlorophyll a-b binding proteins. It depends on Binds at least 14 chlorophylls (8 Chl-a and 6 Chl-b) and carotenoids such as lutein and neoxanthin. as a cofactor. In terms of processing, photoregulated by reversible phosphorylation of its threonine residues.

It is found in the plastid. The protein resides in the chloroplast thylakoid membrane. In terms of biological role, the light-harvesting complex (LHC) functions as a light receptor, it captures and delivers excitation energy to photosystems with which it is closely associated. This Populus euphratica (Euphrates poplar) protein is Chlorophyll a-b binding protein 2, chloroplastic.